A 312-amino-acid polypeptide reads, in one-letter code: Olfactory receptor 7G3 (312 aa).

Residues 1-25 (MKAGNFSDTPEFFLLGLSGDPELQP) are Extracellular-facing. The N-linked (GlcNAc...) asparagine glycan is linked to asparagine 5. A helical membrane pass occupies residues 26–46 (ILFMLFLSMYLATMLGNLLII). The Cytoplasmic segment spans residues 47–54 (LAVNSDSH). The helical transmembrane segment at 55 to 75 (LHTPMYFLLSILSLVDICFTS) threads the bilayer. Residues 76–99 (TTMPKMLVNIQAQAQSINYTGCLT) lie on the Extracellular side of the membrane. Residue asparagine 93 is glycosylated (N-linked (GlcNAc...) asparagine). Cysteine 97 and cysteine 189 form a disulfide bridge. A helical transmembrane segment spans residues 100 to 120 (QICFVLVFVGLENGILVMMAY). Residues 121–139 (DRFVAICHPLRYNVIMNPK) lie on the Cytoplasmic side of the membrane. Residues 140–160 (LCGLLLLLSFIVSVLDALLHT) traverse the membrane as a helical segment. At 161-197 (LMVLQLTFCIDLEIPHFFCELAHILKLACSDVLINNI) the chain is on the extracellular side. Residues 198 to 217 (LVYLVTSLLGVVPLSGIIFS) traverse the membrane as a helical segment. The Cytoplasmic segment spans residues 218-237 (YTRIVSSVMKIPSAGGKYKA). A helical transmembrane segment spans residues 238 to 258 (FSICGSHLIVVSLFYGTGFGV). Residues 259-271 (YLSSGATHSSRKG) are Extracellular-facing. The helical transmembrane segment at 272–292 (AIASVMYTVVTPMLNPLIYSL) threads the bilayer. The Cytoplasmic portion of the chain corresponds to 293 to 312 (RNKDMLKALRKLISRIPSFH).

The protein belongs to the G-protein coupled receptor 1 family.

Its subcellular location is the cell membrane. Its function is as follows. Odorant receptor. This Homo sapiens (Human) protein is Olfactory receptor 7G3 (OR7G3).